The chain runs to 404 residues: Alanine racemase (404 aa).

The active-site Proton acceptor; specific for D-alanine is the K34. An N6-(pyridoxal phosphate)lysine modification is found at K34. R133 contacts substrate. In terms of domain architecture, RPE1 insert spans E226–R273. The Proton acceptor; specific for L-alanine role is filled by Y298. M346 serves as a coordination point for substrate.

Belongs to the alanine racemase family. Requires pyridoxal 5'-phosphate as cofactor.

The enzyme catalyses L-alanine = D-alanine. It functions in the pathway amino-acid biosynthesis; D-alanine biosynthesis; D-alanine from L-alanine: step 1/1. In terms of biological role, catalyzes the interconversion of L-alanine and D-alanine. May also act on other amino acids. The sequence is that of Alanine racemase (alr) from Rickettsia prowazekii (strain Madrid E).